Here is a 130-residue protein sequence, read N- to C-terminus: Small ribosomal subunit protein uS8 (130 aa).

The protein belongs to the universal ribosomal protein uS8 family.

In Paracentrotus lividus (Common sea urchin), this protein is Small ribosomal subunit protein uS8 (RPS15A).